Consider the following 276-residue polypeptide: Putative pyruvate, phosphate dikinase regulatory protein (276 aa).

Residue 150-157 (GVSRTSKT) participates in ADP binding.

This sequence belongs to the pyruvate, phosphate/water dikinase regulatory protein family. PDRP subfamily.

The catalysed reaction is N(tele)-phospho-L-histidyl/L-threonyl-[pyruvate, phosphate dikinase] + ADP = N(tele)-phospho-L-histidyl/O-phospho-L-threonyl-[pyruvate, phosphate dikinase] + AMP + H(+). It carries out the reaction N(tele)-phospho-L-histidyl/O-phospho-L-threonyl-[pyruvate, phosphate dikinase] + phosphate + H(+) = N(tele)-phospho-L-histidyl/L-threonyl-[pyruvate, phosphate dikinase] + diphosphate. Its function is as follows. Bifunctional serine/threonine kinase and phosphorylase involved in the regulation of the pyruvate, phosphate dikinase (PPDK) by catalyzing its phosphorylation/dephosphorylation. This Lacticaseibacillus casei (strain BL23) (Lactobacillus casei) protein is Putative pyruvate, phosphate dikinase regulatory protein.